The following is a 488-amino-acid chain: MADVRKLKNYINGEWVESKADKYEDVINPATGEVLCQVPISTRAELDQAAVIAEQAFEKWSQVAVPRRARVLFSFQQLLIQHKEELARLITLENGKNLSEARGEVQRGIENVEFAAGAPTLMMGDSLASIATDVEAANYRYPVGVVGGIAPFNFPMMVPCWMFPMAIALGNSFILKPSERTPLLMEKLVELFSEAGLPKGVFNVVYGAHDVVNGILENETIKAVSFVGSKPVGEYVYKTGSANLKRVQALTGAKNHTIVLNDADLEDTVTNVISAAFGSAGERCMACAVVTVEEGIADDFLAALRTAAQNVKIGNGLDDGVFLGPVIREENQKRTIAYIEKGVEEGAKLTVDGRETGLSEGYFVGPTILEDVTTDMTIWKDEIFAPVLSVIRVKNLQEAVRVANQSEFANGACIFTNNAKAIRYFREKIDAGMLGVNLGVPAPMAFFPFSGWKSSFYGTLHANGKDSVDFYTHKKVVTARYSLKGYEE.

NAD(+) is bound by residues alanine 150, phenylalanine 152, lysine 176, glutamate 179, arginine 180, serine 229, and threonine 251. Cysteine 284 functions as the Nucleophile in the catalytic mechanism. Residue glutamate 382 coordinates NAD(+).

Belongs to the aldehyde dehydrogenase family. IolA subfamily. Homotetramer.

It carries out the reaction 3-oxopropanoate + NAD(+) + CoA + H2O = hydrogencarbonate + acetyl-CoA + NADH + H(+). It catalyses the reaction 2-methyl-3-oxopropanoate + NAD(+) + CoA + H2O = propanoyl-CoA + hydrogencarbonate + NADH + H(+). It participates in polyol metabolism; myo-inositol degradation into acetyl-CoA; acetyl-CoA from myo-inositol: step 7/7. Catalyzes the oxidation of malonate semialdehyde (MSA) and methylmalonate semialdehyde (MMSA) into acetyl-CoA and propanoyl-CoA, respectively. Is involved in a myo-inositol catabolic pathway. Bicarbonate, and not CO2, is the end-product of the enzymatic reaction. The sequence is that of Malonate-semialdehyde dehydrogenase from Listeria innocua serovar 6a (strain ATCC BAA-680 / CLIP 11262).